Here is a 529-residue protein sequence, read N- to C-terminus: Bifunctional purine biosynthesis protein PurH (529 aa).

Positions 1 to 148 constitute an MGS-like domain; it reads MQQRRPVRRA…KNHKDVAIVV (148 aa). An N6-acetyllysine modification is found at Lys287.

It belongs to the PurH family.

The catalysed reaction is (6R)-10-formyltetrahydrofolate + 5-amino-1-(5-phospho-beta-D-ribosyl)imidazole-4-carboxamide = 5-formamido-1-(5-phospho-D-ribosyl)imidazole-4-carboxamide + (6S)-5,6,7,8-tetrahydrofolate. It carries out the reaction IMP + H2O = 5-formamido-1-(5-phospho-D-ribosyl)imidazole-4-carboxamide. Its pathway is purine metabolism; IMP biosynthesis via de novo pathway; 5-formamido-1-(5-phospho-D-ribosyl)imidazole-4-carboxamide from 5-amino-1-(5-phospho-D-ribosyl)imidazole-4-carboxamide (10-formyl THF route): step 1/1. It participates in purine metabolism; IMP biosynthesis via de novo pathway; IMP from 5-formamido-1-(5-phospho-D-ribosyl)imidazole-4-carboxamide: step 1/1. In Escherichia coli (strain SMS-3-5 / SECEC), this protein is Bifunctional purine biosynthesis protein PurH.